The sequence spans 146 residues: Mu-like prophage FluMu G protein 1 (146 aa).

This sequence to phage Mu protein G.

This chain is Mu-like prophage FluMu G protein 1, found in Haemophilus influenzae (strain ATCC 51907 / DSM 11121 / KW20 / Rd).